A 437-amino-acid chain; its full sequence is Aspartokinase (437 aa).

The protein belongs to the aspartokinase family.

It carries out the reaction L-aspartate + ATP = 4-phospho-L-aspartate + ADP. It participates in amino-acid biosynthesis; L-lysine biosynthesis via DAP pathway; (S)-tetrahydrodipicolinate from L-aspartate: step 1/4. The protein operates within amino-acid biosynthesis; L-methionine biosynthesis via de novo pathway; L-homoserine from L-aspartate: step 1/3. Its pathway is amino-acid biosynthesis; L-threonine biosynthesis; L-threonine from L-aspartate: step 1/5. This chain is Aspartokinase (lysC), found in Chlamydia muridarum (strain MoPn / Nigg).